A 273-amino-acid polypeptide reads, in one-letter code: MAVVKCKPTSPGRRHVVKVVNPELHKGKPFAPLLEKNSKSGGRNNNGRITTRHIGGGHKQAYRIVDFKRNKDGIPAVVERLEYDPNRSANIALVLYKDGERRYILAPKGLKAGDQIQSGVDAAIKAGNTLPMRNIPVGSTVHNVEMKPGKGGQLARSAGTYVQIVARDGAYVTLRLRSGEMRKVEADCRATLGEVGNAEHMLRVLGKAGAARWRGVRPTVRGTAMNPVDHPHGGGEGRNFGKHPVSPWGLQTKGKKTRSNKRTDKFIVRRRSK.

Disordered stretches follow at residues 28-53 (KPFAPLLEKNSKSGGRNNNGRITTRH) and 221-273 (RGTA…RRSK). Over residues 39–48 (KSGGRNNNGR) the composition is skewed to low complexity.

Belongs to the universal ribosomal protein uL2 family. As to quaternary structure, part of the 50S ribosomal subunit. Forms a bridge to the 30S subunit in the 70S ribosome.

Functionally, one of the primary rRNA binding proteins. Required for association of the 30S and 50S subunits to form the 70S ribosome, for tRNA binding and peptide bond formation. It has been suggested to have peptidyltransferase activity; this is somewhat controversial. Makes several contacts with the 16S rRNA in the 70S ribosome. The chain is Large ribosomal subunit protein uL2 from Klebsiella pneumoniae (strain 342).